The sequence spans 703 residues: Protein teflon (703 aa).

The C2H2-type 1 zinc finger occupies Met32–His55. Disordered regions lie at residues Ser78 to Ser111, Glu140 to Pro161, Asn205 to Leu239, and Ser339 to Glu434. A compositionally biased stretch (polar residues) spans Gln84–Asp94. The segment covering Pro148–Pro161 has biased composition (basic and acidic residues). Composition is skewed to polar residues over residues Ser339–Val352 and Ser364–Ile373. 2 consecutive C2H2-type zinc fingers follow at residues Tyr649–His672 and Phe677–His700.

This sequence belongs to the Teflon family.

Its subcellular location is the nucleus. It is found in the chromosome. Functionally, specifically required in males for proper segregation of autosomal bivalents at meiosis I. Expression is required in the male germ line prior to spermatocyte stage S4. May have a role as a bridging molecule maintaining adhesion to hold autosome bivalents together via heterochromatic connections. This is Protein teflon from Drosophila persimilis (Fruit fly).